The following is a 315-amino-acid chain: Histone-lysine N-methyltransferase SETMAR (315 aa).

One can recognise a Pre-SET domain in the interval 74–137 (PGCACIKTPC…HCRNRVVQSG (64 aa)). Zn(2+) is bound by residues cysteine 76, cysteine 78, cysteine 83, cysteine 88, cysteine 90, cysteine 119, cysteine 123, cysteine 125, and cysteine 129. One can recognise an SET domain in the interval 140–264 (FLLQVFQTEK…PGEELSYDYS (125 aa)). S-adenosyl-L-methionine contacts are provided by residues 150-152 (KGW), tyrosine 193, arginine 221, and 224-225 (NH). The Zn(2+) site is built by cysteine 227, cysteine 288, cysteine 290, and cysteine 295. Residues 284–300 (PRKPCYCGAQSCATFLP) enclose the Post-SET domain.

This sequence belongs to the class V-like SAM-binding methyltransferase superfamily.

Its subcellular location is the nucleus. It is found in the chromosome. It carries out the reaction L-lysyl(36)-[histone H3] + 2 S-adenosyl-L-methionine = N(6),N(6)-dimethyl-L-lysyl(36)-[histone H3] + 2 S-adenosyl-L-homocysteine + 2 H(+). Functionally, histone methyltransferase that methylates 'Lys-4' and 'Lys-36' of histone H3, 2 specific tags for epigenetic transcriptional activation. Specifically mediates dimethylation of H3 'Lys-36'. In Rattus norvegicus (Rat), this protein is Histone-lysine N-methyltransferase SETMAR.